Consider the following 1234-residue polypeptide: Coiled-coil domain-containing protein CG32809 (1234 aa).

The segment covering 1-11 (MLIRWKSKDKS) has biased composition (basic and acidic residues). Disordered stretches follow at residues 1 to 88 (MLIR…HAHQ), 107 to 129 (KNKKNQPMRGYAPVNQGPLFDDD), and 330 to 350 (KVSMDGYTSSPERSSRGNYEE). Positions 12–25 (ASSNQSVGGSSSSS) are enriched in low complexity. Basic and acidic residues predominate over residues 55 to 69 (GDERRRAMRRDDPRR). Residues 412–436 (HRIRVEHMERQLANLTGLVQKALVN) adopt a coiled-coil conformation. Residues 498–548 (DIQGIPKSHNPLHAAETKPTKPAIKSSTLPRTSSQERDRLKPPPPPKPIVL) form a disordered region. Coiled coils occupy residues 565–594 (EVYNHLRGLQKKAKDLRMEVRTLRRLSQAQ) and 630–666 (TRISREEELYKQEVIRLEKDLSDLEGSVENLRGEVIN). Disordered regions lie at residues 754-793 (EQRLPPNEPTISEETPRSADISAPDKPIPTPRMGSFALSG), 815-852 (IAQQQQQQQQQQQQQQQQHQHQQLYEIRPEDSASDESA), 928-1011 (LHSY…PPNQ), and 1028-1070 (SANA…ESGN). Composition is skewed to low complexity over residues 817–837 (QQQQQQQQQQQQQQQQHQHQQ), 952–965 (TSSSTSLANGGSSS), 993–1004 (TSSRSPLASPTS), 1028–1039 (SANANANANSNA), and 1046–1068 (VGETTSVVSGDTSSGDNSSGNES). A coiled-coil region spans residues 1077 to 1105 (VALEMRHQELLKKQKMLQEQYQRLQQMSK).

This Drosophila melanogaster (Fruit fly) protein is Coiled-coil domain-containing protein CG32809.